A 177-amino-acid chain; its full sequence is ATP-dependent protease subunit HslV (177 aa).

The active site involves Thr-4. Na(+)-binding residues include Ser-159, Cys-162, and Thr-165.

This sequence belongs to the peptidase T1B family. HslV subfamily. In terms of assembly, a double ring-shaped homohexamer of HslV is capped on each side by a ring-shaped HslU homohexamer. The assembly of the HslU/HslV complex is dependent on binding of ATP.

The protein resides in the cytoplasm. The enzyme catalyses ATP-dependent cleavage of peptide bonds with broad specificity.. With respect to regulation, allosterically activated by HslU binding. Its function is as follows. Protease subunit of a proteasome-like degradation complex believed to be a general protein degrading machinery. In Mesorhizobium japonicum (strain LMG 29417 / CECT 9101 / MAFF 303099) (Mesorhizobium loti (strain MAFF 303099)), this protein is ATP-dependent protease subunit HslV.